Here is a 370-residue protein sequence, read N- to C-terminus: MISIYTQPTLAQAWLQKYQGSCPIFALILGYTQTGLIPGISAAGATPQDRQYTAIADAEFLVKGCVKTPQYPLPPLNVGVSPVYISRAVIEAFNIPIYLFNAGLPDPPSVPFIDLEGIPAHCLSSGQALPLDKVYHLYTQGVKWGEKLALIAPKSYLMIGECVVGGTTTALAVLRGLGVDAAGKVNSSHPQCNHAQKWSVVQLGLQKLGTLSDIDPFRLVAAVGDPMQIVAAGMAIAASRTIGVMLAGGTQMLAVYALIKSIISHFQERANLSQLVVGTTRWVAEDKSGDTIGLAQLIPNVPLLATQLNLNQSRYPQLQVYEQGYVKEGVGAGGCAIASYLYQGWTQQQLLNAIESLIAQSVEIKIEHNS.

Belongs to the UPF0284 family.

This chain is UPF0284 protein PCC7424_2681, found in Gloeothece citriformis (strain PCC 7424) (Cyanothece sp. (strain PCC 7424)).